Here is a 210-residue protein sequence, read N- to C-terminus: UPF0301 protein OCAR_7326/OCA5_c07920 (210 aa).

This sequence belongs to the UPF0301 (AlgH) family.

The polypeptide is UPF0301 protein OCAR_7326/OCA5_c07920 (Afipia carboxidovorans (strain ATCC 49405 / DSM 1227 / KCTC 32145 / OM5) (Oligotropha carboxidovorans)).